The primary structure comprises 188 residues: Glutathione S-transferase 2 (188 aa).

The GST N-terminal domain occupies 2 to 79; that stretch reads VHYKLMCFDV…FLARQYGYSG (78 aa). Glutathione-binding positions include K43, 49–51, and 63–64; these read GQL and QS. Residues 81 to 188 enclose the GST C-terminal domain; it reads TPTEEMQVDS…PHLNVFIRKL (108 aa).

The protein belongs to the GST superfamily. Sigma family.

It catalyses the reaction RX + glutathione = an S-substituted glutathione + a halide anion + H(+). In terms of biological role, conjugation of reduced glutathione to a wide number of exogenous and endogenous hydrophobic electrophiles. The sequence is that of Glutathione S-transferase 2 (gst-2) from Caenorhabditis elegans.